The sequence spans 341 residues: HTH-type transcriptional repressor PurR (341 aa).

The region spanning Ala2–Val56 is the HTH lacI-type domain. The H-T-H motif DNA-binding region spans Ile4–Asn23. A DNA-binding region spans residues Ser48 to Val56. Tyr73, Arg190, Thr192, Phe221, and Asp275 together coordinate hypoxanthine.

In terms of assembly, homodimer.

The protein operates within purine metabolism; purine nucleotide biosynthesis [regulation]. In terms of biological role, is the main repressor of the genes involved in the de novo synthesis of purine nucleotides, regulating purB, purC, purEK, purF, purHD, purL, purMN and guaBA expression. PurR is allosterically activated to bind its cognate DNA by binding the purine corepressors, hypoxanthine or guanine, thereby effecting transcription repression. The polypeptide is HTH-type transcriptional repressor PurR (Edwardsiella ictaluri (strain 93-146)).